A 690-amino-acid chain; its full sequence is Glycine--tRNA ligase 1, mitochondrial (690 aa).

Residues 1 to 24 (MSFFNISRRFYSQIVKKSVKIKRM) constitute a mitochondrion transit peptide. Ser25 carries the N-acetylserine modification. Ser226 carries the phosphoserine modification. Glycine is bound at residue Glu251. ATP-binding positions include 283–285 (RNE) and 294–295 (RV). Residue Glu302 participates in glycine binding. Residue 410–411 (EC) participates in ATP binding. Phosphoserine is present on residues Ser476 and Ser528. 531-533 (EPS) contributes to the glycine binding site. Arg538 serves as a coordination point for ATP. Thr689 is modified (phosphothreonine).

Belongs to the class-II aminoacyl-tRNA synthetase family. As to quaternary structure, homodimer.

The protein resides in the cytoplasm. It is found in the mitochondrion matrix. It catalyses the reaction tRNA(Gly) + glycine + ATP = glycyl-tRNA(Gly) + AMP + diphosphate. It carries out the reaction 2 ATP + H(+) = P(1),P(4)-bis(5'-adenosyl) tetraphosphate + diphosphate. Catalyzes the ATP-dependent ligation of glycine to the 3'-end of its cognate tRNA, via the formation of an aminoacyl-adenylate intermediate (Gly-AMP). Also produces diadenosine tetraphosphate (Ap4A), a universal pleiotropic signaling molecule needed for cell regulation pathways, by direct condensation of 2 ATPs. Thereby, may play a special role in Ap4A homeostasis. This is Glycine--tRNA ligase 1, mitochondrial (GRS1) from Saccharomyces cerevisiae (strain ATCC 204508 / S288c) (Baker's yeast).